The chain runs to 475 residues: Ribulose bisphosphate carboxylase large chain (475 aa).

Positions 1-2 (MS) are excised as a propeptide. Pro-3 is modified (N-acetylproline). Lys-14 bears the N6,N6,N6-trimethyllysine mark. Substrate-binding residues include Asn-123 and Thr-173. Catalysis depends on Lys-175, which acts as the Proton acceptor. Residue Lys-177 participates in substrate binding. Residues Lys-201, Asp-203, and Glu-204 each contribute to the Mg(2+) site. Residue Lys-201 is modified to N6-carboxylysine. His-294 acts as the Proton acceptor in catalysis. Substrate contacts are provided by Arg-295, His-327, and Ser-379.

It belongs to the RuBisCO large chain family. Type I subfamily. As to quaternary structure, heterohexadecamer of 8 large chains and 8 small chains; disulfide-linked. The disulfide link is formed within the large subunit homodimers. Requires Mg(2+) as cofactor. The disulfide bond which can form in the large chain dimeric partners within the hexadecamer appears to be associated with oxidative stress and protein turnover.

The protein resides in the plastid. It is found in the chloroplast. It carries out the reaction 2 (2R)-3-phosphoglycerate + 2 H(+) = D-ribulose 1,5-bisphosphate + CO2 + H2O. The enzyme catalyses D-ribulose 1,5-bisphosphate + O2 = 2-phosphoglycolate + (2R)-3-phosphoglycerate + 2 H(+). RuBisCO catalyzes two reactions: the carboxylation of D-ribulose 1,5-bisphosphate, the primary event in carbon dioxide fixation, as well as the oxidative fragmentation of the pentose substrate in the photorespiration process. Both reactions occur simultaneously and in competition at the same active site. The chain is Ribulose bisphosphate carboxylase large chain from Equisetum arvense (Field horsetail).